The primary structure comprises 208 residues: Small ribosomal subunit protein uS4 (208 aa).

One can recognise an S4 RNA-binding domain in the interval 98–158 (RRLDNVVYRL…EKSRGQLRIK (61 aa)).

This sequence belongs to the universal ribosomal protein uS4 family. Part of the 30S ribosomal subunit. Contacts protein S5. The interaction surface between S4 and S5 is involved in control of translational fidelity.

In terms of biological role, one of the primary rRNA binding proteins, it binds directly to 16S rRNA where it nucleates assembly of the body of the 30S subunit. Functionally, with S5 and S12 plays an important role in translational accuracy. In Magnetococcus marinus (strain ATCC BAA-1437 / JCM 17883 / MC-1), this protein is Small ribosomal subunit protein uS4.